A 116-amino-acid chain; its full sequence is Type IV narrow pilus major component PilA5 (116 aa).

The propeptide at 1-5 (MRAKG) is leader sequence. F6 is subject to N-methylphenylalanine. A helical transmembrane segment spans residues 6 to 26 (FTLIELAIVIVIIGILVAIAV).

Glycosylated.

It localises to the cell inner membrane. It is found in the cell outer membrane. Its subcellular location is the periplasm. Functionally, plays an essential role in forming the main structure of the narrow T4P pili that participates in twitching motility. The polypeptide is Type IV narrow pilus major component PilA5 (pilA5) (Thermus thermophilus (strain ATCC BAA-163 / DSM 7039 / HB27)).